The chain runs to 211 residues: Ribosomal RNA small subunit methyltransferase G (211 aa).

Residues G81, L86, 132 to 133 (VE), and R147 contribute to the S-adenosyl-L-methionine site.

Belongs to the methyltransferase superfamily. RNA methyltransferase RsmG family.

Its subcellular location is the cytoplasm. The catalysed reaction is guanosine(527) in 16S rRNA + S-adenosyl-L-methionine = N(7)-methylguanosine(527) in 16S rRNA + S-adenosyl-L-homocysteine. Its function is as follows. Specifically methylates the N7 position of guanine in position 527 of 16S rRNA. This chain is Ribosomal RNA small subunit methyltransferase G, found in Actinobacillus succinogenes (strain ATCC 55618 / DSM 22257 / CCUG 43843 / 130Z).